Here is a 1047-residue protein sequence, read N- to C-terminus: Jouberin (1047 aa).

2 stretches are compositionally biased toward basic and acidic residues: residues 1 to 17 (MEQE…EKVR) and 77 to 86 (LLHDDKLGSE). Disordered stretches follow at residues 1-44 (MEQE…LTEA) and 67-185 (EQLT…SPVH). The tract at residues 1 to 285 (MEQETPEKVD…IFNENFPYLL (285 aa)) is interaction with HAP1. Residues 87–96 (KRKKKKKKKV) show a composition bias toward basic residues. The segment covering 116–132 (GEQKKEGAPEGSHHREG) has biased composition (basic and acidic residues). The segment covering 150–160 (PKPKKMKKKPK) has biased composition (basic residues). The segment covering 173–185 (GVHEITGRDSPVH) has biased composition (basic and acidic residues). WD repeat units follow at residues 458–500 (AGER…FMRE), 503–542 (GHLN…TSTF), 546–586 (PHPS…DAAI), 593–632 (VHKS…TDVQ), 649–688 (FRGV…ARKF), 692–731 (ANYR…QVAM), and 736–777 (PFKS…AQQE). The residue at position 854 (Ser854) is a Phosphoserine. Positions 903 to 963 (DPPPMVVALY…PANHVASETL (61 aa)) constitute an SH3 domain. Basic and acidic residues-rich tracts occupy residues 964–1003 (YRDS…RFLD) and 1012–1040 (GHSE…EPTV). The disordered stretch occupies residues 964 to 1047 (YRDSPPKVKE…PTVRKVTLIE (84 aa)). At Ser975 the chain carries Phosphoserine.

In terms of assembly, self-associates. Part of the tectonic-like complex (also named B9 complex). Interacts with MKS1. Interacts with NPHP1; probably as heterodimers and/or AHI1(2):NPHP1(2) heterotetramers. Interacts (via SH3 domain) with the dynamin GTPase DNM2. Interacts with HAP1; probably as AHI1(2):HAP1(2) heterotetramers. Interacts with RAB8A. Interacts with CEND1. Interacts with SPATA7.

Its subcellular location is the cytoplasm. It localises to the cytoskeleton. The protein localises to the cilium basal body. It is found in the microtubule organizing center. The protein resides in the centrosome. Its subcellular location is the centriole. It localises to the cell junction. The protein localises to the adherens junction. Its function is as follows. Involved in vesicle trafficking and required for ciliogenesis, formation of primary non-motile cilium, and recruitment of RAB8A to the basal body of primary cilium. Component of the tectonic-like complex, a complex localized at the transition zone of primary cilia and acting as a barrier that prevents diffusion of transmembrane proteins between the cilia and plasma membranes. Involved in neuronal differentiation. As a positive modulator of classical Wnt signaling, may play a crucial role in ciliary signaling during cerebellum embryonic development. The polypeptide is Jouberin (Ahi1) (Rattus norvegicus (Rat)).